A 149-amino-acid chain; its full sequence is Calmodulin (149 aa).

Position 2 is an N-acetylalanine (alanine 2). EF-hand domains are found at residues 8–43, 44–79, 81–116, and 117–149; these read EQIA…LGQN, PTEA…KMKD, DTEE…LGEK, and LTDE…MMAK. Ca(2+) contacts are provided by aspartate 21, aspartate 23, aspartate 25, threonine 27, glutamate 32, aspartate 57, aspartate 59, asparagine 61, threonine 63, glutamate 68, aspartate 94, aspartate 96, asparagine 98, and glutamate 105. Position 116 is an N6,N6,N6-trimethyllysine (lysine 116). Residues aspartate 130, aspartate 132, aspartate 134, histidine 136, and glutamate 141 each coordinate Ca(2+).

It belongs to the calmodulin family.

Calmodulin mediates the control of a large number of enzymes, ion channels and other proteins by Ca(2+). Among the enzymes to be stimulated by the calmodulin-Ca(2+) complex are a number of protein kinases and phosphatases. The chain is Calmodulin from Tetrahymena pyriformis.